A 414-amino-acid chain; its full sequence is Serine/threonine transporter SstT (414 aa).

The Cytoplasmic segment spans residues 2-15 (TTQHSPGLFRRLAH). The chain crosses the membrane as a helical span at residues 16–36 (GSLVKQILAGLILGILLAWIS). Over 37 to 45 (KPAAEAVGL) the chain is Periplasmic. Residues 46–66 (LGTLFVGALKAVAPILVLMLV) traverse the membrane as a helical segment. Topologically, residues 67–83 (MASIANHQHGQKTNIRP) are cytoplasmic. Residues 84–104 (ILFLYLLGTFSAALAAVIFSF) traverse the membrane as a helical segment. The Periplasmic portion of the chain corresponds to 105 to 142 (AFPSTLHLSSSAGDISPPSGIVEVMRGLVMSMVSNPID). The helical transmembrane segment at 143 to 163 (ALLKGNYIGILVWAIGLGFAL) threads the bilayer. Residues 164-179 (RHGNETTKNLVNDMSN) are Cytoplasmic-facing. Residues 180–200 (AVTFMVKLVIHFAPIGIFGLV) traverse the membrane as a helical segment. The Periplasmic portion of the chain corresponds to 201-217 (SSTLATTGFSTLWGYAQ). The chain crosses the membrane as a helical span at residues 218 to 238 (LLVVLVGCMLLVALVVNPLLV). Topologically, residues 239 to 299 (WWKIRRNPFP…VSIPLGATIN (61 aa)) are cytoplasmic. Residues 300–320 (MAGAAITITVLTLAAVNTLGI) form a helical membrane-spanning segment. The Periplasmic segment spans residues 321-331 (PVDLPTALLLS). Residues 332 to 352 (VVASLCACGASGVAGGSLLLI) traverse the membrane as a helical segment. Topologically, residues 353-414 (PLACNMFGIS…DRLANSALRN (62 aa)) are cytoplasmic.

It belongs to the dicarboxylate/amino acid:cation symporter (DAACS) (TC 2.A.23) family.

The protein localises to the cell inner membrane. The enzyme catalyses L-serine(in) + Na(+)(in) = L-serine(out) + Na(+)(out). It carries out the reaction L-threonine(in) + Na(+)(in) = L-threonine(out) + Na(+)(out). In terms of biological role, involved in the import of serine and threonine into the cell, with the concomitant import of sodium (symport system). In Escherichia coli (strain UTI89 / UPEC), this protein is Serine/threonine transporter SstT.